The following is a 340-amino-acid chain: Protein-lysine N-methyltransferase EEF2KMT (340 aa).

Met1 carries the N-acetylmethionine modification. Residues Trp139, 165-167 (GSG), Trp238, and Ala257 contribute to the S-adenosyl-L-methionine site.

It belongs to the class I-like SAM-binding methyltransferase superfamily. EEF2KMT family. Interacts with FAM86B2 and FAM86C1P.

Its subcellular location is the cytoplasm. It carries out the reaction L-lysyl-[protein] + 3 S-adenosyl-L-methionine = N(6),N(6),N(6)-trimethyl-L-lysyl-[protein] + 3 S-adenosyl-L-homocysteine + 3 H(+). In terms of biological role, catalyzes the trimethylation of eukaryotic elongation factor 2 (EEF2) on 'Lys-525'. This chain is Protein-lysine N-methyltransferase EEF2KMT (EEF2KMT), found in Bos taurus (Bovine).